The primary structure comprises 319 residues: Putative protein phosphatase 2C 23 (319 aa).

The 242-residue stretch at 73–314 (AVRMESASCY…DDITVVVACI (242 aa)) folds into the PPM-type phosphatase domain. The Mn(2+) site is built by Gly102, Asp235, and Asp305.

It belongs to the PP2C family. Requires Mg(2+) as cofactor.

It carries out the reaction O-phospho-L-seryl-[protein] + H2O = L-seryl-[protein] + phosphate. The catalysed reaction is O-phospho-L-threonyl-[protein] + H2O = L-threonyl-[protein] + phosphate. This is Putative protein phosphatase 2C 23 from Oryza sativa subsp. japonica (Rice).